We begin with the raw amino-acid sequence, 213 residues long: MKQALVDDTEDVSLDFGNEEELAFRKAKIRHPLATFFHLFFRVSAIVTYVSCDWFSKSFVGCFVMVLLLLSLDFWSVKNVTGRLLVGLRWWNQIDEDGKSHWIFEARKVSPNSIAATEAEARIFWLGLIICPMIWIVFFFSTLFSLKLKWLALVVAGISLQAANLYGYILCKMGGNSDIGKVTASFLSQTVFQTACPGDFQKPGLEGLEIHQH.

The next 4 helical transmembrane spans lie at 32–52, 54–74, 123–143, and 150–170; these read PLATFFHLFFRVSAIVTYVSC, WFSKSFVGCFVMVLLLLSLDF, IFWLGLIICPMIWIVFFFSTL, and WLALVVAGISLQAANLYGYIL.

This sequence belongs to the TVP23 family.

The protein localises to the membrane. This Homo sapiens (Human) protein is Golgi apparatus membrane protein TVP23 homolog A (TVP23A).